We begin with the raw amino-acid sequence, 59 residues long: Potassium channel toxin alpha-KTx 16.7 (59 aa).

A signal peptide spans 1-22 (MKILSILLIALVICSISICTEA). 3 disulfide bridges follow: Cys-30–Cys-51, Cys-36–Cys-56, and Cys-40–Cys-58.

Belongs to the short scorpion toxin superfamily. Potassium channel inhibitor family. Alpha-KTx 16 subfamily. Expressed by the venom gland.

Its subcellular location is the secreted. In terms of biological role, may play a role in blocking voltage-gated potassium channels Kv1.2/KCNA2, and Kv1.3/KCNA3. Blocks the voltage-gated potassium channel Kv1.3/KCNA3, with an IC(50) of 118.3 +-55.8 nM. The sequence is that of Potassium channel toxin alpha-KTx 16.7 from Mesobuthus gibbosus (Mediterranean checkered scorpion).